Consider the following 100-residue polypeptide: MAKKSMIERDKRRSRLVAKYAAKREALKEEFRQAETLEDKLAVHQKLQDLPRNSAPNRRRNRCQVTGRPRSYYRDFGLCRNVLREWAHQGLLPGVTKSSW.

This sequence belongs to the universal ribosomal protein uS14 family. Part of the 30S ribosomal subunit. Contacts proteins S3 and S10.

In terms of biological role, binds 16S rRNA, required for the assembly of 30S particles and may also be responsible for determining the conformation of the 16S rRNA at the A site. The chain is Small ribosomal subunit protein uS14 from Synechocystis sp. (strain ATCC 27184 / PCC 6803 / Kazusa).